Here is a 382-residue protein sequence, read N- to C-terminus: Chaperone protein DnaJ (382 aa).

The 66-residue stretch at 5–70 folds into the J domain; the sequence is DYYELLGVQK…EKRAAYDRYG (66 aa). The CR-type zinc-finger motif lies at 146 to 224; sequence GAEKEISFRK…CHGEGRVRRT (79 aa). Positions 159, 162, 176, 179, 198, 201, 212, and 215 each coordinate Zn(2+). CXXCXGXG motif repeat units lie at residues 159–166, 176–183, 198–205, and 212–219; these read CERCDGSG, CPTCRGAG, CPTCGGMG, and CTVCHGEG. The tract at residues 230–250 is disordered; the sequence is RIPPGVDNGSRLRSSGNGEAG.

This sequence belongs to the DnaJ family. Homodimer. It depends on Zn(2+) as a cofactor.

The protein localises to the cytoplasm. In terms of biological role, participates actively in the response to hyperosmotic and heat shock by preventing the aggregation of stress-denatured proteins and by disaggregating proteins, also in an autonomous, DnaK-independent fashion. Unfolded proteins bind initially to DnaJ; upon interaction with the DnaJ-bound protein, DnaK hydrolyzes its bound ATP, resulting in the formation of a stable complex. GrpE releases ADP from DnaK; ATP binding to DnaK triggers the release of the substrate protein, thus completing the reaction cycle. Several rounds of ATP-dependent interactions between DnaJ, DnaK and GrpE are required for fully efficient folding. Also involved, together with DnaK and GrpE, in the DNA replication of plasmids through activation of initiation proteins. This chain is Chaperone protein DnaJ, found in Opitutus terrae (strain DSM 11246 / JCM 15787 / PB90-1).